The primary structure comprises 481 residues: Aspartyl/glutamyl-tRNA(Asn/Gln) amidotransferase subunit B (481 aa).

It belongs to the GatB/GatE family. GatB subfamily. As to quaternary structure, heterotrimer of A, B and C subunits.

It carries out the reaction L-glutamyl-tRNA(Gln) + L-glutamine + ATP + H2O = L-glutaminyl-tRNA(Gln) + L-glutamate + ADP + phosphate + H(+). It catalyses the reaction L-aspartyl-tRNA(Asn) + L-glutamine + ATP + H2O = L-asparaginyl-tRNA(Asn) + L-glutamate + ADP + phosphate + 2 H(+). Allows the formation of correctly charged Asn-tRNA(Asn) or Gln-tRNA(Gln) through the transamidation of misacylated Asp-tRNA(Asn) or Glu-tRNA(Gln) in organisms which lack either or both of asparaginyl-tRNA or glutaminyl-tRNA synthetases. The reaction takes place in the presence of glutamine and ATP through an activated phospho-Asp-tRNA(Asn) or phospho-Glu-tRNA(Gln). The sequence is that of Aspartyl/glutamyl-tRNA(Asn/Gln) amidotransferase subunit B from Pseudomonas paraeruginosa (strain DSM 24068 / PA7) (Pseudomonas aeruginosa (strain PA7)).